The chain runs to 990 residues: Pentatricopeptide repeat-containing protein At4g33170 (990 aa).

PPR repeat units follow at residues 73–107, 109–139, 144–178, 179–209, 210–244, 279–313, 314–348, 349–379, 380–414, 415–450, 451–477, 481–515, 516–550, 551–581, 582–616, 617–651, 652–682, 683–717, 718–753, and 754–788; these read ERFL…DLVS, NSIL…LRQD, SRMT…GLDG, DEFV…MPYR, DVVL…GLNP, EIIF…DVEC, DQVT…GLDL, MLTV…MSER, DLIS…GLKP, DQYT…NNVS, DSFV…LFER, DLVA…GERS, DDFT…GYDL, DLWV…IPVP, DDVA…GVLP, DEFT…NCTN, DPFV…IEMM, NITA…GIKP, DKVT…GIKP, and EIEH…ASAS. The type E motif stretch occupies residues 789-864; it reads MYRTLLAACR…DPGFSWIEVK (76 aa). Residues 865–895 form a type E(+) motif region; the sequence is NKIHIFVVDDRSNRQTELIYRKVKDMIRDIK. The interval 896–990 is type DYW motif; it reads QEGYVPETDF…DGICSCGDYW (95 aa).

It belongs to the PPR family. PCMP-H subfamily.

The polypeptide is Pentatricopeptide repeat-containing protein At4g33170 (PCMP-H53) (Arabidopsis thaliana (Mouse-ear cress)).